The primary structure comprises 240 residues: UDP-2,3-diacylglucosamine hydrolase (240 aa).

Residues Asp-9, His-11, Asp-43, Asn-81, and His-116 each contribute to the Mn(2+) site. Substrate is bound at residue 81 to 82 (NR). Residues Asp-124, Ser-162, Lys-166, Lys-169, and His-197 each contribute to the substrate site. The Mn(2+) site is built by His-197 and His-199.

This sequence belongs to the LpxH family. Mn(2+) is required as a cofactor.

It localises to the cell inner membrane. It carries out the reaction UDP-2-N,3-O-bis[(3R)-3-hydroxytetradecanoyl]-alpha-D-glucosamine + H2O = 2-N,3-O-bis[(3R)-3-hydroxytetradecanoyl]-alpha-D-glucosaminyl 1-phosphate + UMP + 2 H(+). The protein operates within glycolipid biosynthesis; lipid IV(A) biosynthesis; lipid IV(A) from (3R)-3-hydroxytetradecanoyl-[acyl-carrier-protein] and UDP-N-acetyl-alpha-D-glucosamine: step 4/6. Functionally, hydrolyzes the pyrophosphate bond of UDP-2,3-diacylglucosamine to yield 2,3-diacylglucosamine 1-phosphate (lipid X) and UMP by catalyzing the attack of water at the alpha-P atom. Involved in the biosynthesis of lipid A, a phosphorylated glycolipid that anchors the lipopolysaccharide to the outer membrane of the cell. This Neisseria gonorrhoeae (strain ATCC 700825 / FA 1090) protein is UDP-2,3-diacylglucosamine hydrolase.